The sequence spans 396 residues: S-adenosylmethionine synthase (396 aa).

Residue His15 participates in ATP binding. Asp17 lines the Mg(2+) pocket. Position 43 (Glu43) interacts with K(+). L-methionine is bound by residues Glu56 and Gln99. The tract at residues 99–109 (QSSDIAQGVDR) is flexible loop. ATP-binding positions include 175 to 177 (DGK), 241 to 242 (RF), Asp250, 256 to 257 (RK), Ser273, and Lys277. Residue Asp250 coordinates L-methionine. Lys281 contacts L-methionine.

Belongs to the AdoMet synthase family. As to quaternary structure, homotetramer; dimer of dimers. It depends on Mg(2+) as a cofactor. K(+) serves as cofactor.

It is found in the cytoplasm. It catalyses the reaction L-methionine + ATP + H2O = S-adenosyl-L-methionine + phosphate + diphosphate. Its pathway is amino-acid biosynthesis; S-adenosyl-L-methionine biosynthesis; S-adenosyl-L-methionine from L-methionine: step 1/1. Catalyzes the formation of S-adenosylmethionine (AdoMet) from methionine and ATP. The overall synthetic reaction is composed of two sequential steps, AdoMet formation and the subsequent tripolyphosphate hydrolysis which occurs prior to release of AdoMet from the enzyme. This Pelotomaculum thermopropionicum (strain DSM 13744 / JCM 10971 / SI) protein is S-adenosylmethionine synthase.